The chain runs to 74 residues: MNTATCFIVLLVVATVIGGIEAGEFDMRKDVMGLFRRAICPGADRPCAACCPCCPGTSCKAESNGVFYCRKDEP.

The signal sequence occupies residues 1-22 (MNTATCFIVLLVVATVIGGIEA). A propeptide spanning residues 23–35 (GEFDMRKDVMGLF) is cleaved from the precursor. 4 disulfides stabilise this stretch: Cys40–Cys54, Cys47–Cys59, Cys50–Cys51, and Cys53–Cys69.

It belongs to the neurotoxin 11 (kappa toxin) family. Expressed by the venom gland.

It localises to the secreted. Functionally, this excitatory toxin inhibits insect calcium-activated potassium (KCa) channels (Slo-type). This is Lambda-hexatoxin-Hv1e from Hadronyche versuta (Blue mountains funnel-web spider).